Reading from the N-terminus, the 430-residue chain is Glutamate-1-semialdehyde 2,1-aminomutase (430 aa).

The residue at position 265 (lysine 265) is an N6-(pyridoxal phosphate)lysine.

Belongs to the class-III pyridoxal-phosphate-dependent aminotransferase family. HemL subfamily. As to quaternary structure, homodimer. Requires pyridoxal 5'-phosphate as cofactor.

The protein resides in the cytoplasm. It carries out the reaction (S)-4-amino-5-oxopentanoate = 5-aminolevulinate. The protein operates within porphyrin-containing compound metabolism; protoporphyrin-IX biosynthesis; 5-aminolevulinate from L-glutamyl-tRNA(Glu): step 2/2. The polypeptide is Glutamate-1-semialdehyde 2,1-aminomutase (Helicobacter pylori (strain Shi470)).